We begin with the raw amino-acid sequence, 171 residues long: 3-hydroxydecanoyl-[acyl-carrier-protein] dehydratase (171 aa).

Residue histidine 70 is part of the active site.

This sequence belongs to the thioester dehydratase family. FabA subfamily. As to quaternary structure, homodimer.

It is found in the cytoplasm. It catalyses the reaction a (3R)-hydroxyacyl-[ACP] = a (2E)-enoyl-[ACP] + H2O. The catalysed reaction is (3R)-hydroxydecanoyl-[ACP] = (2E)-decenoyl-[ACP] + H2O. The enzyme catalyses (2E)-decenoyl-[ACP] = (3Z)-decenoyl-[ACP]. Its pathway is lipid metabolism; fatty acid biosynthesis. Its function is as follows. Necessary for the introduction of cis unsaturation into fatty acids. Catalyzes the dehydration of (3R)-3-hydroxydecanoyl-ACP to E-(2)-decenoyl-ACP and then its isomerization to Z-(3)-decenoyl-ACP. Can catalyze the dehydratase reaction for beta-hydroxyacyl-ACPs with saturated chain lengths up to 16:0, being most active on intermediate chain length. In Methylobacillus flagellatus (strain ATCC 51484 / DSM 6875 / VKM B-1610 / KT), this protein is 3-hydroxydecanoyl-[acyl-carrier-protein] dehydratase.